Here is a 300-residue protein sequence, read N- to C-terminus: 5'-adenylylsulfate reductase-like 5 (300 aa).

Positions 1–23 (MDSRVSILFVCAIAVSCFTSGSA) are cleaved as a signal peptide. The Thioredoxin domain occupies 41–161 (FDLEAKCPPS…LIEFYEEATG (121 aa)). N-linked (GlcNAc...) asparagine glycosylation occurs at asparagine 136. The helical transmembrane segment at 202–222 (FLVLSLLFICLQMAILVFPIA) threads the bilayer.

Its subcellular location is the membrane. The chain is 5'-adenylylsulfate reductase-like 5 (APRL5) from Arabidopsis thaliana (Mouse-ear cress).